The following is a 97-amino-acid chain: Co-chaperonin GroES (97 aa).

Belongs to the GroES chaperonin family. As to quaternary structure, heptamer of 7 subunits arranged in a ring. Interacts with the chaperonin GroEL.

It localises to the cytoplasm. Functionally, together with the chaperonin GroEL, plays an essential role in assisting protein folding. The GroEL-GroES system forms a nano-cage that allows encapsulation of the non-native substrate proteins and provides a physical environment optimized to promote and accelerate protein folding. GroES binds to the apical surface of the GroEL ring, thereby capping the opening of the GroEL channel. This Pseudomonas putida (strain GB-1) protein is Co-chaperonin GroES.